We begin with the raw amino-acid sequence, 462 residues long: Chromosomal replication initiator protein DnaA (462 aa).

A domain I, interacts with DnaA modulators region spans residues 1-84 (MAVSLWQQCI…RFDIGSRPSA (84 aa)). The segment at 84-125 (APKPIQATAAVVKPKLESSPQKSQTSFNVNAPEPAATANHRS) is domain II. The interval 126–342 (NINPTYQFEN…GALNRVIANA (217 aa)) is domain III, AAA+ region. 4 residues coordinate ATP: glycine 170, glycine 172, lysine 173, and threonine 174. The domain IV, binds dsDNA stretch occupies residues 343–462 (NFTGRPITID…YANLIRTLSS (120 aa)).

The protein belongs to the DnaA family. In terms of assembly, oligomerizes as a right-handed, spiral filament on DNA at oriC.

The protein resides in the cytoplasm. Plays an essential role in the initiation and regulation of chromosomal replication. ATP-DnaA binds to the origin of replication (oriC) to initiate formation of the DNA replication initiation complex once per cell cycle. Binds the DnaA box (a 9 base pair repeat at the origin) and separates the double-stranded (ds)DNA. Forms a right-handed helical filament on oriC DNA; dsDNA binds to the exterior of the filament while single-stranded (ss)DNA is stabiized in the filament's interior. The ATP-DnaA-oriC complex binds and stabilizes one strand of the AT-rich DNA unwinding element (DUE), permitting loading of DNA polymerase. After initiation quickly degrades to an ADP-DnaA complex that is not apt for DNA replication. Binds acidic phospholipids. This is Chromosomal replication initiator protein DnaA from Shewanella woodyi (strain ATCC 51908 / MS32).